The sequence spans 156 residues: MRPRFFVVYLIAALVIAVDQWTKQWAASTIPPLIGYTVIPGFFDLVNVRNRGAAFGFLNRSDIEWQFWLFFAAAVTAVLAIIAMTRSAKSNPYLFTGFGLIMGGAIGNLIDRIRFRAVIDFLDFHIGGYHWPAFNVADMGICVGAFFVCLAVYKHK.

A run of 3 helical transmembrane segments spans residues 5-25 (FFVVYLIAALVIAVDQWTKQW), 63-83 (IEWQFWLFFAAAVTAVLAIIA), and 90-110 (SNPYLFTGFGLIMGGAIGNLI). Catalysis depends on residues aspartate 120 and aspartate 138. The chain crosses the membrane as a helical span at residues 133-153 (AFNVADMGICVGAFFVCLAVY).

It belongs to the peptidase A8 family.

Its subcellular location is the cell inner membrane. It catalyses the reaction Release of signal peptides from bacterial membrane prolipoproteins. Hydrolyzes -Xaa-Yaa-Zaa-|-(S,diacylglyceryl)Cys-, in which Xaa is hydrophobic (preferably Leu), and Yaa (Ala or Ser) and Zaa (Gly or Ala) have small, neutral side chains.. Its pathway is protein modification; lipoprotein biosynthesis (signal peptide cleavage). Its function is as follows. This protein specifically catalyzes the removal of signal peptides from prolipoproteins. In Oleidesulfovibrio alaskensis (strain ATCC BAA-1058 / DSM 17464 / G20) (Desulfovibrio alaskensis), this protein is Lipoprotein signal peptidase.